Here is a 329-residue protein sequence, read N- to C-terminus: Beta-ketoacyl-[acyl-carrier-protein] synthase III (329 aa).

Catalysis depends on residues Cys123 and His256. Positions 257 to 261 (QANIR) are ACP-binding. Asn286 is an active-site residue.

The protein belongs to the thiolase-like superfamily. FabH family. Homodimer.

Its subcellular location is the cytoplasm. The catalysed reaction is malonyl-[ACP] + acetyl-CoA + H(+) = 3-oxobutanoyl-[ACP] + CO2 + CoA. The protein operates within lipid metabolism; fatty acid biosynthesis. In terms of biological role, catalyzes the condensation reaction of fatty acid synthesis by the addition to an acyl acceptor of two carbons from malonyl-ACP. Catalyzes the first condensation reaction which initiates fatty acid synthesis and may therefore play a role in governing the total rate of fatty acid production. Possesses both acetoacetyl-ACP synthase and acetyl transacylase activities. Its substrate specificity determines the biosynthesis of branched-chain and/or straight-chain of fatty acids. The polypeptide is Beta-ketoacyl-[acyl-carrier-protein] synthase III (Burkholderia mallei (strain NCTC 10247)).